The chain runs to 201 residues: Large ribosomal subunit protein uL18 (201 aa).

The protein belongs to the universal ribosomal protein uL18 family. As to quaternary structure, part of the 50S ribosomal subunit. Contacts the 5S and 23S rRNAs.

In terms of biological role, this is one of the proteins that bind and probably mediate the attachment of the 5S RNA into the large ribosomal subunit, where it forms part of the central protuberance. The polypeptide is Large ribosomal subunit protein uL18 (Thermococcus kodakarensis (strain ATCC BAA-918 / JCM 12380 / KOD1) (Pyrococcus kodakaraensis (strain KOD1))).